The primary structure comprises 1192 residues: Coiled-coil domain-containing protein 40 (1192 aa).

5 disordered regions span residues 1–78 (MMDA…PGMD), 126–153 (KAKHRKVRPQAEVESTGRAAPEGELEVS), 173–196 (SSPEVSYSDISPLEMGEDDTNVSA), 211–246 (EPIEPTEPPEPAEPPKPAETPEDSTVRAPAHPYQRD), and 261–289 (GSLTPSDTDDLPLETDEPPQQESVQSTPR). The segment covering 27-45 (PETEVEFIGETAPDTDVEF) has biased composition (acidic residues). Over residues 215–228 (PTEPPEPAEPPKPA) the composition is skewed to pro residues. The span at 267 to 279 (DTDDLPLETDEPP) shows a compositional bias: acidic residues. Position 306 is a phosphoserine (Ser-306). Coiled coils occupy residues 308–369 (EALL…ATKQ), 425–451 (KTCQTANEERKKLAALQTEVESLALHL), 581–649 (DSEI…MLNK), 733–768 (NTNCKIDMHKKTLAEMDKEVKRFNDLITNSESEIAR), 830–871 (LQQE…KIAH), 919–972 (LRTL…EMRS), and 1044–1118 (QQRE…IVTL).

This sequence belongs to the CCDC40 family. As to expression, specifically expressed in the embryonic node and midline.

It is found in the cytoplasm. Its subcellular location is the cell projection. The protein resides in the cilium. In terms of biological role, required for assembly of dynein regulatory complex (DRC) and inner dynein arm (IDA) complexes, which are responsible for ciliary beat regulation, thereby playing a central role in motility in cilia and flagella. Probably acts together with CCDC39 to form a molecular ruler that determines the 96 nanometer (nm) repeat length and arrangements of components in cilia and flagella. Not required for outer dynein arm complexes assembly. Required for axonemal recruitment of CCDC39. The polypeptide is Coiled-coil domain-containing protein 40 (Mus musculus (Mouse)).